The primary structure comprises 664 residues: Degenerin del-1 (664 aa).

Over 1 to 67 (MARKYIDILK…IFTTSLYWVR (67 aa)) the chain is Cytoplasmic. Residues 68–88 (FLWVVVSLVCICLCMYSFSHV) traverse the membrane as a helical segment. At 89–607 (KDKYDRKEKI…WFNLMADMGG (519 aa)) the chain is on the extracellular side. N241, N300, N394, N508, and N562 each carry an N-linked (GlcNAc...) asparagine glycan. A helical transmembrane segment spans residues 608–628 (QAGLFLGASIMSVIEFLFFAV). Topologically, residues 629 to 664 (RTLGIACKPRRWRQKTELLRAEELNDAEKGVSTNNN) are cytoplasmic.

The protein belongs to the amiloride-sensitive sodium channel (TC 1.A.6) family.

It localises to the membrane. Probable sodium channel subunit. This is Degenerin del-1 (del-1) from Caenorhabditis elegans.